A 67-amino-acid chain; its full sequence is Tachystatin-A2 (67 aa).

The signal sequence occupies residues 1–23 (MKLQNTLILIGCLFLMGAMIGDA). 3 disulfides stabilise this stretch: cysteine 27-cysteine 47, cysteine 34-cysteine 52, and cysteine 46-cysteine 64.

Granular hemocytes, small secretory granules.

Its subcellular location is the secreted. Its function is as follows. Exhibits stronger antimicrobial activity against the Gram-positive bacteria (S.aureus (IC(50)=4.2 ug/ml)) and fungi (C.albicans (IC(50)=3.0 ug/ml) and P.pastoris (IC(50)=0.5 ug/ml)) than Gram-negative bacteria (E.coli (IC(50)=25 ug/ml)). Binds to chitin (8.4 uM are required to obtain 50% of binding). Does not cause hemolysis on sheep erythrocytes. Has no blocking activity on the P-type calcium channel. Has also been shown to weakly inhibit Kv1.2/KCNA2 voltage-gated potassium channels and TRPV1 receptors. In Tachypleus tridentatus (Japanese horseshoe crab), this protein is Tachystatin-A2.